The sequence spans 189 residues: dCTP deaminase (189 aa).

DCTP-binding positions include 112-117, 136-138, Gln157, Tyr171, and Gln181; these read KSTYAR and TLE. Glu138 (proton donor/acceptor) is an active-site residue.

Belongs to the dCTP deaminase family. In terms of assembly, homotrimer.

It catalyses the reaction dCTP + H2O + H(+) = dUTP + NH4(+). It participates in pyrimidine metabolism; dUMP biosynthesis; dUMP from dCTP (dUTP route): step 1/2. Its function is as follows. Catalyzes the deamination of dCTP to dUTP. The protein is dCTP deaminase of Burkholderia mallei (strain NCTC 10247).